Reading from the N-terminus, the 626-residue chain is Chaperone protein DnaK (626 aa).

T197 bears the Phosphothreonine; by autocatalysis mark. The segment covering 598–612 has biased composition (low complexity); it reads AQGEQGQAAQPQAET. The segment at 598–626 is disordered; it reads AQGEQGQAAQPQAETQGDDVQDVEFEEVK. Positions 613–626 are enriched in acidic residues; the sequence is QGDDVQDVEFEEVK.

This sequence belongs to the heat shock protein 70 family.

Its function is as follows. Acts as a chaperone. This Flavobacterium psychrophilum (strain ATCC 49511 / DSM 21280 / CIP 103535 / JIP02/86) protein is Chaperone protein DnaK.